Here is a 348-residue protein sequence, read N- to C-terminus: Putative methylthioribose-1-phosphate isomerase (348 aa).

Substrate contacts are provided by residues Arg55 to Ala57, Arg98, and Gln203. Asp244 serves as the catalytic Proton donor. Asn253 to Lys254 lines the substrate pocket.

Belongs to the eIF-2B alpha/beta/delta subunits family. MtnA subfamily.

The catalysed reaction is 5-(methylsulfanyl)-alpha-D-ribose 1-phosphate = 5-(methylsulfanyl)-D-ribulose 1-phosphate. Its function is as follows. Catalyzes the interconversion of methylthioribose-1-phosphate (MTR-1-P) into methylthioribulose-1-phosphate (MTRu-1-P). This Methanosarcina acetivorans (strain ATCC 35395 / DSM 2834 / JCM 12185 / C2A) protein is Putative methylthioribose-1-phosphate isomerase.